The following is a 180-amino-acid chain: ATP synthase subunit b (180 aa).

The chain crosses the membrane as a helical span at residues 26–48; sequence SMILFWKAVNTVILLGLVYYFGG.

Belongs to the ATPase B chain family. In terms of assembly, F-type ATPases have 2 components, F(1) - the catalytic core - and F(0) - the membrane proton channel. F(1) has five subunits: alpha(3), beta(3), gamma(1), delta(1), epsilon(1). F(0) has three main subunits: a(1), b(2) and c(10-14). The alpha and beta chains form an alternating ring which encloses part of the gamma chain. F(1) is attached to F(0) by a central stalk formed by the gamma and epsilon chains, while a peripheral stalk is formed by the delta and b chains.

The protein localises to the cell inner membrane. Its function is as follows. F(1)F(0) ATP synthase produces ATP from ADP in the presence of a proton or sodium gradient. F-type ATPases consist of two structural domains, F(1) containing the extramembraneous catalytic core and F(0) containing the membrane proton channel, linked together by a central stalk and a peripheral stalk. During catalysis, ATP synthesis in the catalytic domain of F(1) is coupled via a rotary mechanism of the central stalk subunits to proton translocation. In terms of biological role, component of the F(0) channel, it forms part of the peripheral stalk, linking F(1) to F(0). The chain is ATP synthase subunit b from Sulfurihydrogenibium sp. (strain YO3AOP1).